Reading from the N-terminus, the 323-residue chain is tRNA-cytidine(32) 2-sulfurtransferase (323 aa).

A PP-loop motif motif is present at residues Ser49–Ser54. 3 residues coordinate [4Fe-4S] cluster: Cys124, Cys127, and Cys215.

Belongs to the TtcA family. In terms of assembly, homodimer. Requires Mg(2+) as cofactor. [4Fe-4S] cluster is required as a cofactor.

It is found in the cytoplasm. The catalysed reaction is cytidine(32) in tRNA + S-sulfanyl-L-cysteinyl-[cysteine desulfurase] + AH2 + ATP = 2-thiocytidine(32) in tRNA + L-cysteinyl-[cysteine desulfurase] + A + AMP + diphosphate + H(+). The protein operates within tRNA modification. Its function is as follows. Catalyzes the ATP-dependent 2-thiolation of cytidine in position 32 of tRNA, to form 2-thiocytidine (s(2)C32). The sulfur atoms are provided by the cysteine/cysteine desulfurase (IscS) system. The chain is tRNA-cytidine(32) 2-sulfurtransferase from Shewanella denitrificans (strain OS217 / ATCC BAA-1090 / DSM 15013).